The following is a 93-amino-acid chain: Hematopoietic cell signal transducer (93 aa).

An N-terminal signal peptide occupies residues 1 to 18 (MIHLGHILFLLLLPVAAA). At 19–48 (QTTPGERSSLPAFYPGTSGSCSGCGSLSLP) the chain is on the extracellular side. A helical membrane pass occupies residues 49–69 (LLAGLVAADAVASLLIVGAVF). Topologically, residues 70–93 (LCARPRRSPAQEDGKVYINMPGRG) are cytoplasmic. Tyr-86 carries the phosphotyrosine modification. The tract at residues 86-88 (YIN) is GRB2 binding site. The PIK3R1 binding site stretch occupies residues 86–89 (YINM).

This sequence belongs to the DAP10 family. As to quaternary structure, interacts with CLEC5A. Forms an CLEC5A/TYROBP/HCST trimolecular complex depending almost solely on TYROBP. Homodimer; Disulfide-linked. Heterohexamer composed of four subunits of HCST/DAP10 and two subunits of KLRK1. Interacts (via transmembrane domain) with KLRK1 (via transmembrane domain); the interaction is required for KLRK1 NK cell surface and induces NK cell-mediated cytotoxicity. Interacts with PIK3R1 and GRB2. Interacts with CD300H. Post-translationally, phosphorylated; PIK3R1 and GRB2 associate specifically with tyrosine-phosphorylated HCST. O-glycosylated. In terms of tissue distribution, predominantly expressed in hemopoietic cells such as NK cells, subset of T-cells and monocytes. Detected in leukocytes, spleen, and thymus.

The protein resides in the membrane. In terms of biological role, transmembrane adapter protein which associates with KLRK1 to form an activation receptor KLRK1-HCST in lymphoid and myeloid cells; this receptor plays a major role in triggering cytotoxicity against target cells expressing cell surface ligands such as MHC class I chain-related MICA and MICB, and UL16-binding proteins (ULBPs); these ligands are up-regulated by stress conditions and pathological state such as viral infection and tumor transformation. Functions as a docking site for PI3-kinase PIK3R1 and GRB2. Interaction of ULBPs with KLRK1-HCST triggers calcium mobilization and activation of the PIK3R1, MAP2K/ERK, and JAK2/STAT5 signaling pathways. Both PIK3R1 and GRB2 are required for full KLRK1-HCST-mediated activation and ultimate killing of target cells. In NK cells, KLRK1-HCST signaling directly induces cytotoxicity and enhances cytokine production initiated via DAP12/TYROBP-associated receptors. In T-cells, it provides primarily costimulation for TCR-induced signals. KLRK1-HCST receptor plays a role in immune surveillance against tumors and is required for cytolysis of tumors cells; indeed, melanoma cells that do not express KLRK1 ligands escape from immune surveillance mediated by NK cells. The protein is Hematopoietic cell signal transducer (HCST) of Homo sapiens (Human).